The following is a 308-amino-acid chain: Glycine--tRNA ligase alpha subunit (308 aa).

Belongs to the class-II aminoacyl-tRNA synthetase family. Tetramer of two alpha and two beta subunits.

The protein resides in the cytoplasm. It catalyses the reaction tRNA(Gly) + glycine + ATP = glycyl-tRNA(Gly) + AMP + diphosphate. In Brucella canis (strain ATCC 23365 / NCTC 10854 / RM-666), this protein is Glycine--tRNA ligase alpha subunit.